Here is a 25-residue protein sequence, read N- to C-terminus: Tubulin alpha chain (25 aa).

Gln11 contributes to the GTP binding site.

This sequence belongs to the tubulin family. Dimer of alpha and beta chains. A typical microtubule is a hollow water-filled tube with an outer diameter of 25 nm and an inner diameter of 15 nM. Alpha-beta heterodimers associate head-to-tail to form protofilaments running lengthwise along the microtubule wall with the beta-tubulin subunit facing the microtubule plus end conferring a structural polarity. Microtubules usually have 13 protofilaments but different protofilament numbers can be found in some organisms and specialized cells. It depends on Mg(2+) as a cofactor.

It is found in the cytoplasm. The protein resides in the cytoskeleton. The enzyme catalyses GTP + H2O = GDP + phosphate + H(+). Functionally, tubulin is the major constituent of microtubules, a cylinder consisting of laterally associated linear protofilaments composed of alpha- and beta-tubulin heterodimers. Microtubules grow by the addition of GTP-tubulin dimers to the microtubule end, where a stabilizing cap forms. Below the cap, tubulin dimers are in GDP-bound state, owing to GTPase activity of alpha-tubulin. In Leptomonas seymouri, this protein is Tubulin alpha chain.